Reading from the N-terminus, the 173-residue chain is Photosystem I assembly protein Ycf3 (173 aa).

3 TPR repeats span residues 35–68 (AYIYYRDGLAAQNNGDYSEALDYYNESLLLEENK), 72–105 (GETLKNMAIIYMSNGEEDRSIETYQKALEENPKQ), and 120–153 (GRFAEQNGDLDQRDMWFDKAAQVWSKAVRLYPGG).

This sequence belongs to the Ycf3 family.

The protein resides in the cellular thylakoid membrane. Its function is as follows. Essential for the assembly of the photosystem I (PSI) complex. May act as a chaperone-like factor to guide the assembly of the PSI subunits. This chain is Photosystem I assembly protein Ycf3, found in Prochlorococcus marinus subsp. pastoris (strain CCMP1986 / NIES-2087 / MED4).